A 577-amino-acid chain; its full sequence is Aspartate--tRNA(Asp/Asn) ligase (577 aa).

E171 lines the L-aspartate pocket. An aspartate region spans residues 195–198 (QLFK). R217 lines the L-aspartate pocket. ATP contacts are provided by residues 217 to 219 (RDE) and Q226. H444 serves as a coordination point for L-aspartate. E474 lines the ATP pocket. Position 481 (R481) interacts with L-aspartate. 526 to 529 (GFDR) provides a ligand contact to ATP.

This sequence belongs to the class-II aminoacyl-tRNA synthetase family. Type 1 subfamily. In terms of assembly, homodimer.

The protein localises to the cytoplasm. It catalyses the reaction tRNA(Asx) + L-aspartate + ATP = L-aspartyl-tRNA(Asx) + AMP + diphosphate. In terms of biological role, aspartyl-tRNA synthetase with relaxed tRNA specificity since it is able to aspartylate not only its cognate tRNA(Asp) but also tRNA(Asn). Reaction proceeds in two steps: L-aspartate is first activated by ATP to form Asp-AMP and then transferred to the acceptor end of tRNA(Asp/Asn). This is Aspartate--tRNA(Asp/Asn) ligase from Helicobacter pylori (strain Shi470).